The chain runs to 751 residues: MSKGECPMRTANVAGGGTKIKDWWPNELPVSVLRQHDPRQNPLTSDFNYAEEFKKLDYNALKKDLTALMTDSQDWWPADFGHYGGLFVRMAWHSAGTYRVTDGRGGGGDGQQRFAPLNAWPDNVSLDKARRLLWPIKQKYGNKISWADLMLLTGNVALESMGCETFGFAGGRPDTFQSDESIYWGGEDTWLGNDVRYSNGNKGVSGEGVVDGDQHKMDHKDIHSRDLEQPVAAAHMGLIYVNPEGPDGVPDPIAAARDIRTTFHRMAMNDEETAALIIGGHSFGKTHGAAPSENTGPDPNSEDLSTQGFGWINKHGSGKGPDTITSGLEVTWTGTPTKWSNKYLEYLYKYEWELEKSPAGANQWVAKTEDHIIPDAYDANKKHKPRMLTTDMSMRMDPGFEKITRRWLDHPQELHDAFIRAWFKLLHRDMGPRSRWVGPEIPKEVLLWEDPVPEVDHALVEESDISALKKQILEAGIEPSKLIRTAWASAASYRGSDKRGGANGARIRLAPQKDWEVNNPKELAEVLKALEGVQSKFNGSASGGKKISLADLIVLAGTAAVEKAAGVSVPFTPGRTDATEEQTDAKSFEHLEPATDPFRNYGKSSDRARTEQLDLDKASLLRLTAPELTVLVGGMRALNANWDSSSHGIFTKRPGQLTNDFFVNLLDINTEWKAADSSKLPELYEGFDRKSGQKKWTGTRHDLVYGSHPELRAIAEVYAQPDNSDKFVKDFVKAWDKVMSNDRFDLKAKSS.

Residues 92–240 (WHSAGTYRVT…VAAAHMGLIY (149 aa)) constitute a cross-link (tryptophyl-tyrosyl-methioninium (Trp-Tyr) (with M-266)). His-93 serves as the catalytic Proton acceptor. The tryptophyl-tyrosyl-methioninium (Tyr-Met) (with W-92) cross-link spans 240–266 (YVNPEGPDGVPDPIAAARDIRTTFHRM). His-281 serves as a coordination point for heme b.

Belongs to the peroxidase family. Peroxidase/catalase subfamily. Homodimer or homotetramer. Heme b is required as a cofactor. Formation of the three residue Trp-Tyr-Met cross-link is important for the catalase, but not the peroxidase activity of the enzyme.

It localises to the cytoplasm. It catalyses the reaction H2O2 + AH2 = A + 2 H2O. The enzyme catalyses 2 H2O2 = O2 + 2 H2O. Its function is as follows. Bifunctional enzyme with both catalase and broad-spectrum peroxidase activity. This is Catalase-peroxidase from Phaeosphaeria nodorum (strain SN15 / ATCC MYA-4574 / FGSC 10173) (Glume blotch fungus).